Here is a 122-residue protein sequence, read N- to C-terminus: Acidic phospholipase A2 CTs-A3 (122 aa).

Cystine bridges form between Cys26–Cys116, Cys28–Cys44, Cys43–Cys95, Cys49–Cys122, Cys50–Cys88, Cys57–Cys81, and Cys75–Cys86. The Ca(2+) site is built by Tyr27, Gly29, and Gly31. His47 is an active-site residue. Asp48 contacts Ca(2+). Asp89 is a catalytic residue.

Ca(2+) serves as cofactor. Expressed by the venom gland.

The protein localises to the secreted. The catalysed reaction is a 1,2-diacyl-sn-glycero-3-phosphocholine + H2O = a 1-acyl-sn-glycero-3-phosphocholine + a fatty acid + H(+). In terms of biological role, snake venom phospholipase A2 (PLA2) that shows a moderate inhibition of ADP-induced human platelet aggregation when tested on platelet rich plasma. Exhibits moderate hydrolytic activities and prefers the anionic micelles (dPPC with deoxycholate) to the zwitterionic micelles (dPPC with Triton X-100). PLA2 catalyzes the calcium-dependent hydrolysis of the 2-acyl groups in 3-sn-phosphoglycerides. In Trimeresurus stejnegeri (Chinese green tree viper), this protein is Acidic phospholipase A2 CTs-A3.